Consider the following 586-residue polypeptide: CTP synthase (586 aa).

The amidoligase domain stretch occupies residues 1-265 (MVRFIFVTGG…ENKVLNFFNI (265 aa)). Ser-13 is a CTP binding site. A UTP-binding site is contributed by Ser-13. ATP is bound by residues 14-19 (SLGKGI) and Asp-71. Asp-71 and Glu-139 together coordinate Mg(2+). CTP-binding positions include 146–148 (DIE), 186–191 (KTKPTQ), and Lys-222. Residues 186 to 191 (KTKPTQ) and Lys-222 contribute to the UTP site. Residues 290-582 (KIAIITKYHK…IKATIEYNKS (293 aa)) enclose the Glutamine amidotransferase type-1 domain. Gly-352 contacts L-glutamine. Residue Cys-379 is the Nucleophile; for glutamine hydrolysis of the active site. Residues 380 to 383 (FGMQ) and Glu-403 contribute to the L-glutamine site. One can recognise an RPE1 insert domain in the interval 429 to 473 (AHISKCTYSEAFECDASTVYTNIHEDSNNLSTDKLQIETNFRNMS). Arg-510 is a binding site for L-glutamine. Catalysis depends on residues His-555 and Glu-557.

This sequence belongs to the CTP synthase family. In terms of assembly, homotetramer.

The enzyme catalyses UTP + L-glutamine + ATP + H2O = CTP + L-glutamate + ADP + phosphate + 2 H(+). It catalyses the reaction L-glutamine + H2O = L-glutamate + NH4(+). The catalysed reaction is UTP + NH4(+) + ATP = CTP + ADP + phosphate + 2 H(+). The protein operates within pyrimidine metabolism; CTP biosynthesis via de novo pathway; CTP from UDP: step 2/2. With respect to regulation, allosterically activated by GTP, when glutamine is the substrate; GTP has no effect on the reaction when ammonia is the substrate. The allosteric effector GTP functions by stabilizing the protein conformation that binds the tetrahedral intermediate(s) formed during glutamine hydrolysis. Inhibited by the product CTP, via allosteric rather than competitive inhibition. In terms of biological role, catalyzes the ATP-dependent amination of UTP to CTP with either L-glutamine or ammonia as the source of nitrogen. Regulates intracellular CTP levels through interactions with the four ribonucleotide triphosphates. The chain is CTP synthase from Rickettsia prowazekii (strain Madrid E).